A 39-amino-acid chain; its full sequence is ALQDDWQQSHLERRQVLAESQKQIQATIGALXXERQXXA.

The protein belongs to the gas vesicle GvpC family.

The protein localises to the gas vesicle. Functionally, confers stability, involved in shaping gas vesicles, hollow, gas filled proteinaceous nanostructures. During planktonic growth they allow positioning of the organism at a favorable depth for light or nutrient acquisition. This chain is Gas vesicle protein C, found in Spirulina sp. (strain CCAP 1475/10).